A 221-amino-acid chain; its full sequence is NEDD4 family-interacting protein 1 (221 aa).

The residue at position 2 (alanine 2) is an N-acetylalanine. The tract at residues 2-41 (ALALAALAAVEPACGSGYQQLQNEEEPGEPEQTAGDAPPP) is interaction with UBE2L3. Residues 2 to 116 (ALALAALAAV…TDQLRIGNDG (115 aa)) are Cytoplasmic-facing. The interval 18–44 (GYQQLQNEEEPGEPEQTAGDAPPPYSS) is disordered. 3 short sequence motifs (PPxY motif) span residues 39-42 (PPPY), 64-67 (PPSY), and 74-76 (PSY). Positions 42–76 (YSSITAESAAYFDYKDESGFPKPPSYNVATTLPSY) are interaction with ITCH. Residues 117 to 137 (IFMLTFFMAFLFNWIGFFLSF) form a helical membrane-spanning segment. At 138-143 (CLTTSA) the chain is on the extracellular side. The helical transmembrane segment at 144–164 (AGRYGAISGFGLSLIKWILIV) threads the bilayer. Over 165-172 (RFSTYFPG) the chain is Cytoplasmic. A helical transmembrane segment spans residues 173–193 (YFDGQYWLWWVFLVLGFLLFL). Topologically, residues 194–221 (RGFINYAKVRKMPETFSNLPRTRVLFIY) are extracellular.

As to quaternary structure, forms heterodimers with NDFIP2. Interacts with several E3 ubiquitin-protein ligases, including ITCH, NEDD4, NEDD4L and WWP2. The interaction with NEDD4, NEDD4L and ITCH leads to relocalization of these proteins to exosomes and eventually to exosomal secretion. Interacts with U2SURP. Interacts with SLC11A2/DMT1. Interacts with PTEN. May interact with phosphorylated EGFR. Interacts with BRAT1. Interacts with KCNH2. Interacts with MAVS. Part of a complex containing ITCH, NDFIP1 and MAP3K7. Interacts (via N-terminus) with UBE2L3; the interaction mediates recruitment of UBE2L3 to ITCH. In terms of processing, ubiquitinated by NEDD4; mono-, di- and polyubiquitinated forms are detected. Ubiquitination regulates its degradation. Post-translationally, undergoes transient tyrosine phosphorylation following EGF stimulation, most probably by catalyzed by SRC. Phosphorylation SRC is enhanced in the presence of NDFIP2 which may act as a scaffold to recruit SRC to NDFIP1. In terms of tissue distribution, highly expressed in embryonic and early postnatal cortex (at protein level). Widely expressed. Hardly detectable in resting T-cells; up-regulated in T-cells in response to activation.

Its subcellular location is the endosome membrane. The protein localises to the golgi apparatus membrane. The protein resides in the synapse. It is found in the synaptosome. It localises to the cell projection. Its subcellular location is the dendrite. The protein localises to the secreted. In terms of biological role, activates HECT domain-containing E3 ubiquitin-protein ligases, including NEDD4 and ITCH, and consequently modulates the stability of their targets. As a result, controls many cellular processes. Prevents chronic T-helper cell-mediated inflammation by activating ITCH and thus controlling JUNB degradation. Promotes pancreatic beta cell death through degradation of JUNB and inhibition of the unfolded protein response, leading to reduction of insulin secretion. Restricts the production of pro-inflammatory cytokines in effector Th17 T-cells by promoting ITCH-mediated ubiquitination and degradation of RORC. Together with NDFIP2, limits the cytokine signaling and expansion of effector Th2 T-cells by promoting degradation of JAK1, probably by ITCH- and NEDD4L-mediated ubiquitination. Regulates peripheral T-cell tolerance to self and foreign antigens, forcing the exit of naive CD4+ T-cells from the cell cycle before they become effector T-cells. Negatively regulates RLR-mediated antiviral response by promoting SMURF1-mediated ubiquitination and subsequent degradation of MAVS. Negatively regulates KCNH2 potassium channel activity by decreasing its cell-surface expression and interfering with channel maturation through recruitment of NEDD4L to the Golgi apparatus where it mediates KCNH2 degradation. In cortical neurons, mediates the ubiquitination of the divalent metal transporter SLC11A2/DMT1 by NEDD4L, leading to its down-regulation and protection of the cells from cobalt and iron toxicity. Important for normal development of dendrites and dendritic spines in cortex. Enhances the ubiquitination of BRAT1 mediated by: NEDD4, NEDD4L and ITCH and is required for the nuclear localization of ubiquitinated BRAT1. Enhances the ITCH-mediated ubiquitination of MAP3K7 by recruiting E2 ubiquitin-conjugating enzyme UBE2L3 to ITCH. Modulates EGFR signaling through multiple pathways. In particular, may regulate the ratio of AKT1-to-MAPK8 signaling in response to EGF, acting on AKT1 probably through PTEN destabilization and on MAPK8 through ITCH-dependent MAP2K4 inactivation. As a result, may control cell growth rate. Inhibits cell proliferation by promoting PTEN nuclear localization and changing its signaling specificity. The protein is NEDD4 family-interacting protein 1 (Ndfip1) of Mus musculus (Mouse).